The following is a 570-amino-acid chain: 2-succinyl-5-enolpyruvyl-6-hydroxy-3-cyclohexene-1-carboxylate synthase (570 aa).

This sequence belongs to the TPP enzyme family. MenD subfamily. In terms of assembly, homodimer. Requires Mg(2+) as cofactor. Mn(2+) serves as cofactor. It depends on thiamine diphosphate as a cofactor.

The enzyme catalyses isochorismate + 2-oxoglutarate + H(+) = 5-enolpyruvoyl-6-hydroxy-2-succinyl-cyclohex-3-ene-1-carboxylate + CO2. Its pathway is quinol/quinone metabolism; 1,4-dihydroxy-2-naphthoate biosynthesis; 1,4-dihydroxy-2-naphthoate from chorismate: step 2/7. It functions in the pathway quinol/quinone metabolism; menaquinone biosynthesis. Its function is as follows. Catalyzes the thiamine diphosphate-dependent decarboxylation of 2-oxoglutarate and the subsequent addition of the resulting succinic semialdehyde-thiamine pyrophosphate anion to isochorismate to yield 2-succinyl-5-enolpyruvyl-6-hydroxy-3-cyclohexene-1-carboxylate (SEPHCHC). The chain is 2-succinyl-5-enolpyruvyl-6-hydroxy-3-cyclohexene-1-carboxylate synthase from Vibrio cholerae serotype O1 (strain ATCC 39541 / Classical Ogawa 395 / O395).